The primary structure comprises 1259 residues: Neural cell adhesion molecule L1 (1259 aa).

The N-terminal stretch at 1-19 is a signal peptide; it reads MVMMLWYVLPLLLCSPCLL. At 20–1122 the chain is on the extracellular side; the sequence is IQIPDEYKGH…VSTTGSFASE (1103 aa). Ig-like C2-type domains follow at residues 35–128, 138–225, 239–327, 332–419, 424–506, and 517–600; these read PVIT…HEIQ, PKET…EPID, PRLL…YYVT, PYWL…AYIY, PARI…NNVT, and TQIT…DEVE. 2 cysteine pairs are disulfide-bonded: Cys57–Cys113 and Cys157–Cys208. N-linked (GlcNAc...) asparagine glycosylation is found at Asn100, Asn202, Asn246, and Asn293. 2 disulfide bridges follow: Cys263–Cys311 and Cys353–Cys403. Residues Asn432, Asn489, and Asn504 are each glycosylated (N-linked (GlcNAc...) asparagine). Residues Cys447 and Cys496 are joined by a disulfide bond. An intrachain disulfide couples Cys538 to Cys590. 2 short sequence motifs (cell attachment site) span residues 553 to 555 and 562 to 564; these read RGD. Fibronectin type-III domains are found at residues 613 to 711, 716 to 809, 811 to 916, 919 to 1014, and 1016 to 1116; these read PVPH…TPEA, NPVD…SGED, PQVS…PEGV, HPEA…MALF, and KPDF…VSTT. Asn670 carries an N-linked (GlcNAc...) asparagine glycan. The tract at residues 697-724 is disordered; sequence GEPSPVSETVVTPEAAPEKNPVDVRGEG. The span at 712–724 shows a compositional bias: basic and acidic residues; the sequence is APEKNPVDVRGEG. N-linked (GlcNAc...) asparagine glycosylation is found at Asn725, Asn776, Asn824, Asn848, Asn875, Asn968, Asn978, Asn1021, Asn1029, Asn1072, and Asn1106. The helical transmembrane segment at 1123–1145 threads the bilayer; sequence GWFIAFVSAIILLLLILLILCFI. Topologically, residues 1146-1259 are cytoplasmic; the sequence is KRSKGGKYSV…SPINPAVALE (114 aa). A phosphoserine mark is found at Ser1165, Arg1179, Ser1180, Ser1183, Ser1196, Ser1245, Ser1246, and Ser1250. Disordered stretches follow at residues 1182-1209 and 1228-1259; these read ESDN…SDDS and IGQY…VALE. Polar residues predominate over residues 1243-1252; sequence NDSSGATSPI.

Belongs to the immunoglobulin superfamily. L1/neurofascin/NgCAM family. Interacts with SHTN1; the interaction occurs in axonal growth cones. Interacts with isoform 2 of BSG. As to expression, isoform 2 is predominantly found in the brain, while isoform 1 is found in the peripheral nervous system.

The protein localises to the cell membrane. The protein resides in the cell projection. It localises to the growth cone. In terms of biological role, neural cell adhesion molecule involved in the dynamics of cell adhesion and in the generation of transmembrane signals at tyrosine kinase receptors. During brain development, critical in multiple processes, including neuronal migration, axonal growth and fasciculation, and synaptogenesis. In the mature brain, plays a role in the dynamics of neuronal structure and function, including synaptic plasticity. This chain is Neural cell adhesion molecule L1 (L1cam), found in Rattus norvegicus (Rat).